The sequence spans 255 residues: Triosephosphate isomerase (255 aa).

Asn-9–Lys-11 provides a ligand contact to substrate. The Electrophile role is filled by His-95. Residue Glu-167 is the Proton acceptor of the active site. Residues Gly-173, Ser-212, and Gly-233 to Gly-234 contribute to the substrate site.

The protein belongs to the triosephosphate isomerase family. In terms of assembly, homodimer.

It localises to the cytoplasm. It carries out the reaction D-glyceraldehyde 3-phosphate = dihydroxyacetone phosphate. It participates in carbohydrate biosynthesis; gluconeogenesis. The protein operates within carbohydrate degradation; glycolysis; D-glyceraldehyde 3-phosphate from glycerone phosphate: step 1/1. In terms of biological role, involved in the gluconeogenesis. Catalyzes stereospecifically the conversion of dihydroxyacetone phosphate (DHAP) to D-glyceraldehyde-3-phosphate (G3P). The sequence is that of Triosephosphate isomerase from Enterobacter cloacae.